A 284-amino-acid chain; its full sequence is Tropomyosin (284 aa).

The stretch at 1–284 forms a coiled coil; sequence MDGIKKKMIA…DQTFAELTGY (284 aa). Residues 111–131 are disordered; it reads TKLEEASKTAEESERGRKDLE.

This sequence belongs to the tropomyosin family. Homodimer.

Tropomyosin, in association with the troponin complex, plays a central role in the calcium dependent regulation of muscle contraction. The sequence is that of Tropomyosin from Schistosoma japonicum (Blood fluke).